A 341-amino-acid chain; its full sequence is Phenylalanine--tRNA ligase alpha subunit (341 aa).

Glutamate 256 provides a ligand contact to Mg(2+).

It belongs to the class-II aminoacyl-tRNA synthetase family. Phe-tRNA synthetase alpha subunit type 1 subfamily. As to quaternary structure, tetramer of two alpha and two beta subunits. Mg(2+) serves as cofactor.

It is found in the cytoplasm. The catalysed reaction is tRNA(Phe) + L-phenylalanine + ATP = L-phenylalanyl-tRNA(Phe) + AMP + diphosphate + H(+). The polypeptide is Phenylalanine--tRNA ligase alpha subunit (Chlamydia abortus (strain DSM 27085 / S26/3) (Chlamydophila abortus)).